Consider the following 304-residue polypeptide: Murein tetrapeptide carboxypeptidase (304 aa).

S106 (nucleophile) is an active-site residue. Active-site charge relay system residues include E200 and H270.

It belongs to the peptidase S66 family.

The protein resides in the cytoplasm. It catalyses the reaction N-acetyl-D-glucosaminyl-N-acetylmuramoyl-L-alanyl-meso-2,6-diaminoheptanedioyl-D-alanine + H2O = N-acetyl-D-glucosaminyl-N-acetylmuramoyl-L-alanyl-meso-2,6-diaminoheptanedioate + D-alanine. Its pathway is cell wall biogenesis; peptidoglycan recycling. Releases the terminal D-alanine residue from the cytoplasmic tetrapeptide recycling product L-Ala-gamma-D-Glu-meso-Dap-D-Ala. Can also cleave D-Ala from murein derivatives containing the tetrapeptide, i.e. MurNAc-tetrapeptide, UDP-MurNAc-tetrapeptide, GlcNAc-MurNAc-tetrapeptide, and GlcNAc-anhMurNAc-tetrapeptide. Does not act on murein sacculi or cross-linked muropeptides. The tripeptides produced by the LcdA reaction can then be reused as peptidoglycan building blocks; LcdA is thereby involved in murein recycling. The sequence is that of Murein tetrapeptide carboxypeptidase (ldcA) from Escherichia coli O157:H7.